The chain runs to 227 residues: Small ribosomal subunit protein uS7 (227 aa).

2 stretches are compositionally biased toward acidic residues: residues 1–12 and 20–31; these read MSESDTDPDIDD and NDVDVAVDESES. Residues 1–43 are disordered; that stretch reads MSESDTDPDIDDDAHNNGDNDVDVAVDESESAETTTDTDTASA. Residues 32-43 show a composition bias toward low complexity; it reads AETTTDTDTASA.

Belongs to the universal ribosomal protein uS7 family. In terms of assembly, part of the 30S ribosomal subunit.

One of the primary rRNA binding proteins, it binds directly to 16S rRNA where it nucleates assembly of the head domain of the 30S subunit. Is located at the subunit interface close to the decoding center. The sequence is that of Small ribosomal subunit protein uS7 from Haloquadratum walsbyi (strain DSM 16790 / HBSQ001).